The chain runs to 419 residues: Oligouridylate-binding protein 1B (419 aa).

RRM domains are found at residues 54 to 128 and 139 to 217; these read RSVY…WAYA and FNIF…WATK. Residues 217–257 form a disordered region; that stretch reads KGATSGEDKQSSDSKSVVELTSGVSEDGKDTTNGEAPENNA. Phosphoserine is present on S241. An RRM 3 domain is found at 260–335; it reads TTVYVGNLAP…RQMKCSWGSK (76 aa).

In terms of assembly, interacts with UBA1A and UBA2A.

It localises to the nucleus. Heterogeneous nuclear ribonucleoprotein (hnRNP)-like protein that acts as a component of the pre-mRNA processing machinery. Functions to facilitate the nuclear maturation of plant pre-mRNAs. This is Oligouridylate-binding protein 1B (UBP1B) from Arabidopsis thaliana (Mouse-ear cress).